Here is a 286-residue protein sequence, read N- to C-terminus: Bifunctional protein FolD (286 aa).

NADP(+) contacts are provided by residues G165–S167 and S190.

This sequence belongs to the tetrahydrofolate dehydrogenase/cyclohydrolase family. As to quaternary structure, homodimer.

It carries out the reaction (6R)-5,10-methylene-5,6,7,8-tetrahydrofolate + NADP(+) = (6R)-5,10-methenyltetrahydrofolate + NADPH. It catalyses the reaction (6R)-5,10-methenyltetrahydrofolate + H2O = (6R)-10-formyltetrahydrofolate + H(+). Its pathway is one-carbon metabolism; tetrahydrofolate interconversion. Its function is as follows. Catalyzes the oxidation of 5,10-methylenetetrahydrofolate to 5,10-methenyltetrahydrofolate and then the hydrolysis of 5,10-methenyltetrahydrofolate to 10-formyltetrahydrofolate. The polypeptide is Bifunctional protein FolD (Staphylococcus aureus (strain USA300)).